The chain runs to 396 residues: Obg-like ATPase 1 (396 aa).

Residues 23-283 (LKIGIVGLPN…LSAEERQKYL (261 aa)) form the OBG-type G domain. 32-37 (NVGKST) is a binding site for ATP. The Mg(2+) site is built by S36 and T56. ATP is bound at residue L231. A Nuclear export signal motif is present at residues 267–274 (LELKLQEL). N6-acetyllysine is present on K294. Residues 304-387 (QLEYFFTAGP…EDGDIIFFKF (84 aa)) form the TGS domain.

The protein belongs to the TRAFAC class OBG-HflX-like GTPase superfamily. OBG GTPase family. YchF/OLA1 subfamily. Monomer. Mg(2+) serves as cofactor. In terms of tissue distribution, expressed in all tissues tested but its expression is more abundant in testis, liver, lung, and brain. Overexpressed in several malignancies, including cancers of the colon, rectum, ovary, lung, stomach, and uterus.

Its subcellular location is the cytoplasm. It is found in the nucleus. It localises to the nucleolus. In terms of biological role, hydrolyzes ATP, and can also hydrolyze GTP with lower efficiency. Has lower affinity for GTP. The protein is Obg-like ATPase 1 of Homo sapiens (Human).